The sequence spans 325 residues: Malate dehydrogenase (325 aa).

9 to 15 (GAAGAIG) lines the NAD(+) pocket. Residues arginine 90 and arginine 96 each coordinate substrate. Residues asparagine 103, glutamine 110, and 127–129 (VGN) each bind NAD(+). The substrate site is built by asparagine 129 and arginine 160. Histidine 185 (proton acceptor) is an active-site residue.

Belongs to the LDH/MDH superfamily. MDH type 2 family.

The catalysed reaction is (S)-malate + NAD(+) = oxaloacetate + NADH + H(+). Its function is as follows. Catalyzes the reversible oxidation of malate to oxaloacetate. The protein is Malate dehydrogenase of Rubrobacter xylanophilus (strain DSM 9941 / JCM 11954 / NBRC 16129 / PRD-1).